A 186-amino-acid polypeptide reads, in one-letter code: Ribosome-recycling factor (186 aa).

This sequence belongs to the RRF family.

It is found in the cytoplasm. Its function is as follows. Responsible for the release of ribosomes from messenger RNA at the termination of protein biosynthesis. May increase the efficiency of translation by recycling ribosomes from one round of translation to another. This is Ribosome-recycling factor from Rickettsia massiliae (strain Mtu5).